The chain runs to 189 residues: Dual-action ribosomal maturation protein DarP (189 aa).

The interval M1–R22 is disordered.

It belongs to the DarP family.

The protein resides in the cytoplasm. Its function is as follows. Member of a network of 50S ribosomal subunit biogenesis factors which assembles along the 30S-50S interface, preventing incorrect 23S rRNA structures from forming. Promotes peptidyl transferase center (PTC) maturation. This Xylella fastidiosa (strain Temecula1 / ATCC 700964) protein is Dual-action ribosomal maturation protein DarP.